A 286-amino-acid polypeptide reads, in one-letter code: Nucleotide-binding protein Sfum_2066 (286 aa).

8–15 is a binding site for ATP; that stretch reads GLSGSGKS. Position 59–62 (59–62) interacts with GTP; it reads DIRE.

It belongs to the RapZ-like family.

Its function is as follows. Displays ATPase and GTPase activities. The protein is Nucleotide-binding protein Sfum_2066 of Syntrophobacter fumaroxidans (strain DSM 10017 / MPOB).